Consider the following 280-residue polypeptide: Phosphate import ATP-binding protein PstB (280 aa).

Residues 34 to 275 (IEVKNLNFFY…PARKETEDYI (242 aa)) form the ABC transporter domain. 66-73 (GPSGCGKS) is a binding site for ATP.

The protein belongs to the ABC transporter superfamily. Phosphate importer (TC 3.A.1.7) family. The complex is composed of two ATP-binding proteins (PstB), two transmembrane proteins (PstC and PstA) and a solute-binding protein (PstS).

The protein localises to the cell inner membrane. The catalysed reaction is phosphate(out) + ATP + H2O = ADP + 2 phosphate(in) + H(+). In terms of biological role, part of the ABC transporter complex PstSACB involved in phosphate import. Responsible for energy coupling to the transport system. The sequence is that of Phosphate import ATP-binding protein PstB from Burkholderia mallei (strain ATCC 23344).